The following is a 273-amino-acid chain: Dermonecrotic toxin LapSicTox-alphaII1 (273 aa).

Histidine 5 is a catalytic residue. Residues glutamate 25 and aspartate 27 each contribute to the Mg(2+) site. Histidine 41 functions as the Nucleophile in the catalytic mechanism. Disulfide bonds link cysteine 45–cysteine 51 and cysteine 47–cysteine 191. Position 85 (aspartate 85) interacts with Mg(2+).

Belongs to the arthropod phospholipase D family. Class II subfamily. Mg(2+) serves as cofactor. As to expression, expressed by the venom gland.

Its subcellular location is the secreted. It catalyses the reaction an N-(acyl)-sphingosylphosphocholine = an N-(acyl)-sphingosyl-1,3-cyclic phosphate + choline. The catalysed reaction is an N-(acyl)-sphingosylphosphoethanolamine = an N-(acyl)-sphingosyl-1,3-cyclic phosphate + ethanolamine. The enzyme catalyses a 1-acyl-sn-glycero-3-phosphocholine = a 1-acyl-sn-glycero-2,3-cyclic phosphate + choline. It carries out the reaction a 1-acyl-sn-glycero-3-phosphoethanolamine = a 1-acyl-sn-glycero-2,3-cyclic phosphate + ethanolamine. Functionally, dermonecrotic toxins cleave the phosphodiester linkage between the phosphate and headgroup of certain phospholipids (sphingolipid and lysolipid substrates), forming an alcohol (often choline) and a cyclic phosphate. This toxin acts on sphingomyelin (SM). It may also act on ceramide phosphoethanolamine (CPE), lysophosphatidylcholine (LPC) and lysophosphatidylethanolamine (LPE), but not on lysophosphatidylserine (LPS), and lysophosphatidylglycerol (LPG). It acts by transphosphatidylation, releasing exclusively cyclic phosphate products as second products. Induces dermonecrosis, hemolysis, increased vascular permeability, edema, inflammatory response, and platelet aggregation. The sequence is that of Dermonecrotic toxin LapSicTox-alphaII1 from Loxosceles apachea (Apache recluse spider).